The sequence spans 125 residues: Small ribosomal subunit protein uS12 (125 aa).

Positions 1 to 24 (MPTISQLVRKPRKAKRTKSKVPAL) are disordered. Over residues 9-19 (RKPRKAKRTKS) the composition is skewed to basic residues. Position 89 is a 3-methylthioaspartic acid (Asp-89). The segment at 101-125 (SLDTAGVKDRKQARSKYGSKRPKSA) is disordered. Residues 113–125 (ARSKYGSKRPKSA) show a composition bias toward basic residues.

Belongs to the universal ribosomal protein uS12 family. As to quaternary structure, part of the 30S ribosomal subunit. Contacts proteins S8 and S17. May interact with IF1 in the 30S initiation complex.

In terms of biological role, with S4 and S5 plays an important role in translational accuracy. Its function is as follows. Interacts with and stabilizes bases of the 16S rRNA that are involved in tRNA selection in the A site and with the mRNA backbone. Located at the interface of the 30S and 50S subunits, it traverses the body of the 30S subunit contacting proteins on the other side and probably holding the rRNA structure together. The combined cluster of proteins S8, S12 and S17 appears to hold together the shoulder and platform of the 30S subunit. The polypeptide is Small ribosomal subunit protein uS12 (Nitrosomonas europaea (strain ATCC 19718 / CIP 103999 / KCTC 2705 / NBRC 14298)).